Consider the following 398-residue polypeptide: Trans-2-enoyl-CoA reductase [NADH] (398 aa).

NAD(+)-binding positions include 47 to 52 (GASSGF), 74 to 75 (FE), 111 to 112 (DA), and 139 to 140 (LA). Substrate is bound at residue tyrosine 225. Tyrosine 235 acts as the Proton donor in catalysis. NAD(+) contacts are provided by residues lysine 244 and 274–276 (IVT).

Belongs to the TER reductase family. Monomer.

The catalysed reaction is a 2,3-saturated acyl-CoA + NAD(+) = a (2E)-enoyl-CoA + NADH + H(+). It functions in the pathway lipid metabolism; fatty acid biosynthesis. In terms of biological role, involved in the fatty acid synthesis (FAS II). Catalyzes the reduction of a carbon-carbon double bond in an enoyl moiety that is covalently linked to a coenzyme A (CoA). The protein is Trans-2-enoyl-CoA reductase [NADH] of Clostridium beijerinckii (strain ATCC 51743 / NCIMB 8052) (Clostridium acetobutylicum).